A 347-amino-acid polypeptide reads, in one-letter code: Protein RecA (347 aa).

68–75 (GPESSGKT) serves as a coordination point for ATP.

This sequence belongs to the RecA family.

The protein localises to the cytoplasm. Its function is as follows. Can catalyze the hydrolysis of ATP in the presence of single-stranded DNA, the ATP-dependent uptake of single-stranded DNA by duplex DNA, and the ATP-dependent hybridization of homologous single-stranded DNAs. It interacts with LexA causing its activation and leading to its autocatalytic cleavage. This is Protein RecA from Rhodococcus jostii (strain RHA1).